A 466-amino-acid polypeptide reads, in one-letter code: Ribulose bisphosphate carboxylase (466 aa).

Asn-111 is a substrate binding site. Lys-166 serves as the catalytic Proton acceptor. Substrate is bound at residue Lys-168. Mg(2+)-binding residues include Lys-191, Asp-193, and Glu-194. N6-carboxylysine is present on Lys-191. His-287 functions as the Proton acceptor in the catalytic mechanism. Substrate contacts are provided by Arg-288, His-321, and Ser-368.

Belongs to the RuBisCO large chain family. Type II subfamily. Homodimer. Requires Mg(2+) as cofactor.

It catalyses the reaction 2 (2R)-3-phosphoglycerate + 2 H(+) = D-ribulose 1,5-bisphosphate + CO2 + H2O. The catalysed reaction is D-ribulose 1,5-bisphosphate + O2 = 2-phosphoglycolate + (2R)-3-phosphoglycerate + 2 H(+). In terms of biological role, ruBisCO catalyzes two reactions: the carboxylation of D-ribulose 1,5-bisphosphate, the primary event in carbon dioxide fixation, as well as the oxidative fragmentation of the pentose substrate. Both reactions occur simultaneously and in competition at the same active site. In Rhodospirillum rubrum (strain ATCC 11170 / ATH 1.1.1 / DSM 467 / LMG 4362 / NCIMB 8255 / S1), this protein is Ribulose bisphosphate carboxylase.